The following is a 156-amino-acid chain: C-type lectin lectoxin-Lei1 (156 aa).

Residues 1-23 form the signal peptide; that stretch reads MRRFLFLSLGVLVVAFSLNGIGA. 3 disulfides stabilise this stretch: C27-C38, C55-C154, and C129-C146. The C-type lectin domain maps to 34-155; that stretch reads FDRFCYKVIK…CESRNIFICK (122 aa). 2 N-linked (GlcNAc...) asparagine glycosylation sites follow: N60 and N99. Residues 119 to 121 carry the Sugar-binding motif; the sequence is KRN. A Ca(2+)-binding site is contributed by N142.

It belongs to the true venom lectin family. In terms of tissue distribution, expressed by the venom gland.

The protein resides in the secreted. In terms of biological role, lectin which recognizes specific carbohydrate structures and agglutinates a variety of animal cells by binding to cell-surface glycoproteins and glycolipids. May be a calcium-dependent lectin. The sequence is that of C-type lectin lectoxin-Lei1 from Leioheterodon madagascariensis (Malagasy giant hognose snake).